Here is a 214-residue protein sequence, read N- to C-terminus: Protein get-1 (214 aa).

Residues 1–4 (MPSL) lie on the Lumenal side of the membrane. The helical transmembrane segment at 5–24 (LVVIFVIELFVQLVNTIGAA) threads the bilayer. Residues 25 to 110 (TINNLLWRIA…KFDRTLTTVR (86 aa)) are Cytoplasmic-facing. A coiled-coil region spans residues 73-107 (KWARLRRQHDKLLEDLEKRKKELDAAKTKFDRTLT). The chain crosses the membrane as a helical span at residues 111-131 (VVATRGLQWFLPFWYSREPMF). Residues 132–155 (WLPYGWFPYYVEWFASFPRAPLGS) lie on the Lumenal side of the membrane. A helical transmembrane segment spans residues 156–172 (VSIVVWQWACTGVIKLV). Topologically, residues 173 to 214 (IETVMAVVGLIVAARQKQQEKQKAKQAVPAAGGGDSKAEEAK) are cytoplasmic. Positions 190–214 (QQEKQKAKQAVPAAGGGDSKAEEAK) are disordered.

It belongs to the WRB/GET1 family. In terms of assembly, interacts with GET3.

The protein resides in the endoplasmic reticulum membrane. In terms of biological role, required for the post-translational delivery of tail-anchored (TA) proteins to the endoplasmic reticulum. Acts as a membrane receptor for soluble GET3, which recognizes and selectively binds the transmembrane domain of TA proteins in the cytosol. The chain is Protein get-1 (get-1) from Neurospora crassa (strain ATCC 24698 / 74-OR23-1A / CBS 708.71 / DSM 1257 / FGSC 987).